Here is a 211-residue protein sequence, read N- to C-terminus: Arginine exporter protein ArgO (211 aa).

A run of 6 helical transmembrane segments spans residues 1–21 (MISYYFQGFALGAAMILPLGP), 37–57 (LMIALLCALSDLVLISAGIFG), 68–88 (LLALVTWGGVAFLLWYGFGAL), 111–131 (IIATMLAVTWLNPHVYLDTFV), 147–167 (WFALGTISASFLWFFGLALLA), and 179–199 (AQRIINILVGVVMWLIAFQLA).

The protein belongs to the LysE/ArgO transporter (TC 2.A.75) family.

The protein localises to the cell inner membrane. It catalyses the reaction L-arginine(in) = L-arginine(out). In terms of biological role, involved in the export of arginine. Important to control the intracellular level of arginine and the correct balance between arginine and lysine. The sequence is that of Arginine exporter protein ArgO from Salmonella choleraesuis (strain SC-B67).